The primary structure comprises 366 residues: S-adenosylmethionine decarboxylase proenzyme 1 (366 aa).

Catalysis depends on residues glutamate 9 and glutamate 12. Residue glutamate 68 coordinates substrate. The active-site Schiff-base intermediate with substrate; via pyruvic acid is serine 69. Pyruvic acid (Ser); by autocatalysis is present on serine 69. Cysteine 83 functions as the Proton donor; for catalytic activity in the catalytic mechanism. Active-site proton acceptor; for processing activity residues include serine 233 and histidine 246. Glutamate 250 serves as a coordination point for substrate.

This sequence belongs to the eukaryotic AdoMetDC family. Pyruvate is required as a cofactor. In terms of processing, is synthesized initially as an inactive proenzyme. Formation of the active enzyme involves a self-maturation process in which the active site pyruvoyl group is generated from an internal serine residue via an autocatalytic post-translational modification. Two non-identical subunits are generated from the proenzyme in this reaction, and the pyruvate is formed at the N-terminus of the alpha chain, which is derived from the carboxyl end of the proenzyme. The post-translation cleavage follows an unusual pathway, termed non-hydrolytic serinolysis, in which the side chain hydroxyl group of the serine supplies its oxygen atom to form the C-terminus of the beta chain, while the remainder of the serine residue undergoes an oxidative deamination to produce ammonia and the pyruvoyl group blocking the N-terminus of the alpha chain.

It carries out the reaction S-adenosyl-L-methionine + H(+) = S-adenosyl 3-(methylsulfanyl)propylamine + CO2. It functions in the pathway amine and polyamine biosynthesis; S-adenosylmethioninamine biosynthesis; S-adenosylmethioninamine from S-adenosyl-L-methionine: step 1/1. In terms of biological role, essential for biosynthesis of the polyamines spermidine and spermine. Essential for polyamine homeostasis, and normal plant embryogenesis, growth and development. This is S-adenosylmethionine decarboxylase proenzyme 1 from Arabidopsis thaliana (Mouse-ear cress).